The sequence spans 164 residues: UPF0304 protein ESA_00925 (164 aa).

This sequence belongs to the UPF0304 family.

The sequence is that of UPF0304 protein ESA_00925 from Cronobacter sakazakii (strain ATCC BAA-894) (Enterobacter sakazakii).